A 120-amino-acid chain; its full sequence is Putative ankyrin repeat protein RBE_1215 (120 aa).

2 ANK repeats span residues 22–52 (DGGN…LTNI) and 59–88 (FGDT…ITSV).

The sequence is that of Putative ankyrin repeat protein RBE_1215 from Rickettsia bellii (strain RML369-C).